Here is a 586-residue protein sequence, read N- to C-terminus: CTP synthase (586 aa).

The interval 1-265 (MVRFIFVTGG…ENKVLNFFNI (265 aa)) is amidoligase domain. Position 13 (Ser13) interacts with CTP. Ser13 lines the UTP pocket. ATP-binding positions include 14-19 (SLGKGI) and Asp71. Residues Asp71 and Glu139 each coordinate Mg(2+). Residues 146-148 (DIE), 186-191 (KTKPTQ), and Lys222 each bind CTP. Residues 186–191 (KTKPTQ) and Lys222 each bind UTP. The 293-residue stretch at 290-582 (KIAIITKYHK…IKATIEYNKS (293 aa)) folds into the Glutamine amidotransferase type-1 domain. Gly352 contributes to the L-glutamine binding site. Cys379 acts as the Nucleophile; for glutamine hydrolysis in catalysis. L-glutamine is bound by residues 380-383 (FGMQ) and Glu403. In terms of domain architecture, RPE1 insert spans 429–473 (AHISKCTYSEAFECDASTVYTNIHEDSNNLSTDKLQIETNFRNMS). Arg510 lines the L-glutamine pocket. Residues His555 and Glu557 contribute to the active site.

It belongs to the CTP synthase family. As to quaternary structure, homotetramer.

It catalyses the reaction UTP + L-glutamine + ATP + H2O = CTP + L-glutamate + ADP + phosphate + 2 H(+). It carries out the reaction L-glutamine + H2O = L-glutamate + NH4(+). The catalysed reaction is UTP + NH4(+) + ATP = CTP + ADP + phosphate + 2 H(+). Its pathway is pyrimidine metabolism; CTP biosynthesis via de novo pathway; CTP from UDP: step 2/2. With respect to regulation, allosterically activated by GTP, when glutamine is the substrate; GTP has no effect on the reaction when ammonia is the substrate. The allosteric effector GTP functions by stabilizing the protein conformation that binds the tetrahedral intermediate(s) formed during glutamine hydrolysis. Inhibited by the product CTP, via allosteric rather than competitive inhibition. Functionally, catalyzes the ATP-dependent amination of UTP to CTP with either L-glutamine or ammonia as the source of nitrogen. Regulates intracellular CTP levels through interactions with the four ribonucleotide triphosphates. The protein is CTP synthase of Rickettsia prowazekii (strain Madrid E).